The chain runs to 106 residues: Probable insulin-like peptide beta-type 2 (106 aa).

The first 15 residues, 1–15 (MNAIIFCLLFTTVTA), serve as a signal peptide directing secretion. The propeptide occupies 16 to 56 (TYEVFGKGIEHRNEHLIINQLDIIPVESTPTPNRASRVQKR). Disulfide bonds link C58-C86, C70-C99, C73-C100, and C85-C90.

The protein belongs to the insulin family.

The protein localises to the secreted. This chain is Probable insulin-like peptide beta-type 2 (ins-2), found in Caenorhabditis elegans.